The sequence spans 234 residues: Proteasome subunit alpha type-2 (234 aa).

N-acetylalanine is present on alanine 2. Position 6 is a phosphotyrosine (tyrosine 6). 3 positions are modified to phosphoserine: serine 7, serine 14, and serine 16. Tyrosine 24 is modified (phosphotyrosine). Lysine 70 carries the N6-acetyllysine modification. Phosphotyrosine occurs at positions 76 and 121. Position 171 is an N6-acetyllysine (lysine 171).

This sequence belongs to the peptidase T1A family. As to quaternary structure, the 26S proteasome consists of a 20S proteasome core and two 19S regulatory subunits. The 20S proteasome core is a barrel-shaped complex made of 28 subunits that are arranged in four stacked rings. The two outer rings are each formed by seven alpha subunits, and the two inner rings are formed by seven beta subunits. The proteolytic activity is exerted by three beta-subunits PSMB5, PSMB6 and PSMB7. Post-translationally, phosphorylated on tyrosine residues; which may be important for nuclear import.

It localises to the cytoplasm. Its subcellular location is the nucleus. In terms of biological role, component of the 20S core proteasome complex involved in the proteolytic degradation of most intracellular proteins. This complex plays numerous essential roles within the cell by associating with different regulatory particles. Associated with two 19S regulatory particles, forms the 26S proteasome and thus participates in the ATP-dependent degradation of ubiquitinated proteins. The 26S proteasome plays a key role in the maintenance of protein homeostasis by removing misfolded or damaged proteins that could impair cellular functions, and by removing proteins whose functions are no longer required. Associated with the PA200 or PA28, the 20S proteasome mediates ubiquitin-independent protein degradation. This type of proteolysis is required in several pathways including spermatogenesis (20S-PA200 complex) or generation of a subset of MHC class I-presented antigenic peptides (20S-PA28 complex). The sequence is that of Proteasome subunit alpha type-2 (PSMA2) from Bos taurus (Bovine).